The primary structure comprises 99 residues: NADH-quinone oxidoreductase subunit K (99 aa).

3 helical membrane-spanning segments follow: residues 3–23 (ILFSLFISMAMFTFGIIGILI), 28–48 (LIVFMCVELMLNAANLLFVAF), and 59–79 (IWVFFVLVVAAAEAAVGLAII).

This sequence belongs to the complex I subunit 4L family. As to quaternary structure, NDH-1 is composed of 14 different subunits. Subunits NuoA, H, J, K, L, M, N constitute the membrane sector of the complex.

Its subcellular location is the cell inner membrane. It carries out the reaction a quinone + NADH + 5 H(+)(in) = a quinol + NAD(+) + 4 H(+)(out). Its function is as follows. NDH-1 shuttles electrons from NADH, via FMN and iron-sulfur (Fe-S) centers, to quinones in the respiratory chain. The immediate electron acceptor for the enzyme in this species is believed to be ubiquinone. Couples the redox reaction to proton translocation (for every two electrons transferred, four hydrogen ions are translocated across the cytoplasmic membrane), and thus conserves the redox energy in a proton gradient. This Protochlamydia amoebophila (strain UWE25) protein is NADH-quinone oxidoreductase subunit K.